We begin with the raw amino-acid sequence, 64 residues long: Cytotoxin homolog S4C8 (64 aa).

4 cysteine pairs are disulfide-bonded: Cys3/Cys22, Cys15/Cys40, Cys44/Cys56, and Cys57/Cys62.

The protein belongs to the three-finger toxin family. Short-chain subfamily. Orphan group XIII sub-subfamily. Expressed by the venom gland.

The protein localises to the secreted. The protein is Cytotoxin homolog S4C8 of Aspidelaps scutatus (Shield-nose snake).